Reading from the N-terminus, the 347-residue chain is Uroporphyrinogen decarboxylase (347 aa).

Residues 23–27, Asp73, Tyr150, Thr205, and His323 each bind substrate; that span reads RQAGR.

The protein belongs to the uroporphyrinogen decarboxylase family. In terms of assembly, homodimer.

It is found in the cytoplasm. It carries out the reaction uroporphyrinogen III + 4 H(+) = coproporphyrinogen III + 4 CO2. Its pathway is porphyrin-containing compound metabolism; protoporphyrin-IX biosynthesis; coproporphyrinogen-III from 5-aminolevulinate: step 4/4. In terms of biological role, catalyzes the decarboxylation of four acetate groups of uroporphyrinogen-III to yield coproporphyrinogen-III. The sequence is that of Uroporphyrinogen decarboxylase from Ruthia magnifica subsp. Calyptogena magnifica.